Here is a 759-residue protein sequence, read N- to C-terminus: Glucosylceramidase (759 aa).

The active-site Proton donor is glutamate 247. Glutamate 497 (nucleophile) is an active-site residue. The interval 576 to 600 is disordered; sequence AFENESQRDPQSPAYSESQRNTESY. Residues 584–599 show a composition bias toward polar residues; it reads DPQSPAYSESQRNTES.

It belongs to the glycosyl hydrolase 5 (cellulase A) family.

The protein resides in the membrane. The catalysed reaction is a beta-D-glucosyl-(1&lt;-&gt;1')-N-acylsphing-4-enine + H2O = an N-acylsphing-4-enine + D-glucose. In terms of biological role, specifically hydrolyzes the glucosidic linkage in glucosylceramide. May prevent accumulation of aberrent glucosylceramide containing immature ceramide. This Aspergillus fumigatus (Neosartorya fumigata) protein is Glucosylceramidase.